Reading from the N-terminus, the 314-residue chain is tRNA pseudouridine synthase B (314 aa).

His-43 lines the substrate pocket. Catalysis depends on Asp-48, which acts as the Nucleophile. The substrate site is built by Tyr-76, Tyr-179, and Leu-200.

This sequence belongs to the pseudouridine synthase TruB family. Type 1 subfamily.

The enzyme catalyses uridine(55) in tRNA = pseudouridine(55) in tRNA. Responsible for synthesis of pseudouridine from uracil-55 in the psi GC loop of transfer RNAs. The sequence is that of tRNA pseudouridine synthase B from Pectobacterium atrosepticum (strain SCRI 1043 / ATCC BAA-672) (Erwinia carotovora subsp. atroseptica).